A 510-amino-acid polypeptide reads, in one-letter code: Gelatinase (510 aa).

An N-terminal signal peptide occupies residues 1 to 30 (MMKGNKILYILGTGIFVGSSCLFSSLFVAA). A propeptide spanning residues 31-192 (EEQVYSESEV…IMEKQDLTEH (162 aa)) is cleaved from the precursor. Residue aspartate 324 coordinates Ca(2+). Histidine 328 is a Zn(2+) binding site. Glutamate 329 is an active-site residue. 2 residues coordinate Zn(2+): histidine 332 and glutamate 352. Serine 376 contacts Ca(2+). Histidine 419 serves as the catalytic Proton donor.

Belongs to the peptidase M4 family.

It is found in the secreted. It catalyses the reaction Preferential cleavage: Xaa-|-Leu, Xaa-|-Phe, Xaa-|-Tyr, Xaa-|-Ala.. With respect to regulation, inhibited by L-leucine hydroxamate and phosphoramidon. Not inhibited by phenylmethanesulfonyl fluoride. Reversibly inactivated by straight-chain aliphatic alcohols. Its function is as follows. Metalloprotease capable of the hydrolysis of insoluble hydrophobic substrates. Hydrolyzes azocoll and gelatin and, at a lower rate, soluble and insoluble collagens. Does not cleave short synthetic peptides. Preferentially hydrolyzes the 24-Phe-|-Phe-25 bond in the insulin B-chain, followed by the 5-His-|-Leu-6 bond. Inactivates endothelin-1, primarily by cleavage of the 5-Ser-|-Leu-6 and 16-His-|-Leu-17 bonds. Hydrolyzes the alpha chain of C3 to generate a C3b-like protein. Inhibits complement-mediated hemolysis and opsinization of bacteria. Hydrolyzes the insect antimicrobial peptide cecropin. Decreases the length of E.faecalis chains via the activation of autolysin. Degrades polymerized fibrin. In Enterococcus faecalis (strain ATCC 700802 / V583), this protein is Gelatinase.